The following is a 43-amino-acid chain: Probable intron-encoded DNA endonuclease 2 (43 aa).

Belongs to the LAGLIDADG endonuclease family.

Its subcellular location is the mitochondrion. Its function is as follows. Mitochondrial DNA endonuclease involved in intron homing. The protein is Probable intron-encoded DNA endonuclease 2 (hegI2) of Mycosarcoma maydis (Corn smut fungus).